Here is a 232-residue protein sequence, read N- to C-terminus: uncharacterized protein (232 aa).

A signal peptide spans 1–32; the sequence is MTTSKIATAFKTATFALAAGAVALGLASPADA.

This is an uncharacterized protein from Mycobacterium bovis (strain ATCC BAA-935 / AF2122/97).